The sequence spans 608 residues: Afamin (608 aa).

The N-terminal stretch at 1–21 (MRHLKLTGFIFFLLSLTESLA) is a signal peptide. Albumin domains are found at residues 22–210 (LPTK…APIT), 211–403 (QYLK…KFNE), and 404–599 (TTER…KTGD). N-linked (GlcNAc...) asparagine glycosylation is present at N33. 10 cysteine pairs are disulfide-bonded: C77/C86, C99/C114, C113/C124, C148/C193, C224/C270, C269/C277, C289/C303, C302/C313, C340/C385, and C384/C393. N109 is a glycosylation site (N-linked (GlcNAc...) asparagine). An N-linked (GlcNAc...) asparagine glycan is attached at N153. The segment at 215-319 (ALSSYQRNVC…RADCIINANK (105 aa)) is binding pocket for hydrophobic ligands. N402 is a glycosylation site (N-linked (GlcNAc...) asparagine). Disulfide bonds link C416-C462, C461-C470, C483-C499, C498-C509, and C580-C589. N-linked (GlcNAc...) asparagine glycosylation is present at N488. The segment at 585-608 (KPEACFSPESSKTGDVSQDAEKQR) is disordered.

Belongs to the ALB/AFP/VDB family. Forms a 1:1 complex with Wnt family members; interacts with WNT1, WNT2B, WNT3, WNT3A, WNT5A, WNT7A, WNT7B, WNT8, WNT9A, WNT9B, WNT10A and WNT10B. Post-translationally, N-glycosylated; more than 90% of the glycans are sialylated.

The protein resides in the secreted. Its function is as follows. Functions as a carrier for hydrophobic molecules in body fluids. Essential for the solubility and activity of lipidated Wnt family members, including WNT1, WNT2B, WNT3, WNT3A, WNT5A, WNT7A, WNT7B, WNT8, WNT9A, WNT9B, WNT10A and WNT10B. Binds vitamin E. May transport vitamin E in body fluids under conditions where the lipoprotein system is not sufficient. May be involved in the transport of vitamin E across the blood-brain barrier. The protein is Afamin (Afm) of Rattus norvegicus (Rat).